The following is a 428-amino-acid chain: Phosphomethylpyrimidine synthase (428 aa).

Residues Asn66, Met95, Tyr124, His163, 185–187 (SRG), 226–229 (DGLR), and Glu265 contribute to the substrate site. Residue His269 coordinates Zn(2+). Tyr292 contacts substrate. Residue His333 coordinates Zn(2+). Residues Cys407, Cys410, and Cys414 each coordinate [4Fe-4S] cluster.

This sequence belongs to the ThiC family. [4Fe-4S] cluster is required as a cofactor.

The enzyme catalyses 5-amino-1-(5-phospho-beta-D-ribosyl)imidazole + S-adenosyl-L-methionine = 4-amino-2-methyl-5-(phosphooxymethyl)pyrimidine + CO + 5'-deoxyadenosine + formate + L-methionine + 3 H(+). It functions in the pathway cofactor biosynthesis; thiamine diphosphate biosynthesis. In terms of biological role, catalyzes the synthesis of the hydroxymethylpyrimidine phosphate (HMP-P) moiety of thiamine from aminoimidazole ribotide (AIR) in a radical S-adenosyl-L-methionine (SAM)-dependent reaction. The sequence is that of Phosphomethylpyrimidine synthase from Thermococcus kodakarensis (strain ATCC BAA-918 / JCM 12380 / KOD1) (Pyrococcus kodakaraensis (strain KOD1)).